Here is a 360-residue protein sequence, read N- to C-terminus: Phospho-N-acetylmuramoyl-pentapeptide-transferase (360 aa).

Transmembrane regions (helical) follow at residues 26–46 (AILG…KMIA), 73–93 (TMGG…WGDL), 97–117 (YVWV…IDDY), 132–152 (WKYL…YASA), 168–188 (VMPQ…VGSS), 199–219 (GLAI…AYLS), 236–256 (AGEL…FLWF), 263–283 (VFMG…IAVL), 288–308 (ILLV…ILQV), and 338–358 (VIVR…ATLK).

This sequence belongs to the glycosyltransferase 4 family. MraY subfamily. Requires Mg(2+) as cofactor.

It localises to the cell inner membrane. The catalysed reaction is UDP-N-acetyl-alpha-D-muramoyl-L-alanyl-gamma-D-glutamyl-meso-2,6-diaminopimeloyl-D-alanyl-D-alanine + di-trans,octa-cis-undecaprenyl phosphate = di-trans,octa-cis-undecaprenyl diphospho-N-acetyl-alpha-D-muramoyl-L-alanyl-D-glutamyl-meso-2,6-diaminopimeloyl-D-alanyl-D-alanine + UMP. The protein operates within cell wall biogenesis; peptidoglycan biosynthesis. Functionally, catalyzes the initial step of the lipid cycle reactions in the biosynthesis of the cell wall peptidoglycan: transfers peptidoglycan precursor phospho-MurNAc-pentapeptide from UDP-MurNAc-pentapeptide onto the lipid carrier undecaprenyl phosphate, yielding undecaprenyl-pyrophosphoryl-MurNAc-pentapeptide, known as lipid I. In Shewanella halifaxensis (strain HAW-EB4), this protein is Phospho-N-acetylmuramoyl-pentapeptide-transferase.